The sequence spans 322 residues: Eukaryotic translation initiation factor 3 subunit I (322 aa).

WD repeat units lie at residues 4-43 (GHER…RLGT), 46-85 (GHQG…IIAS), 141-180 (MTES…KVVD), 184-223 (DHTA…CLKT), and 281-322 (GHFG…NIFE).

This sequence belongs to the eIF-3 subunit I family. Component of the eukaryotic translation initiation factor 3 (eIF-3) complex. The eIF-3 complex interacts with pix.

It localises to the cytoplasm. In terms of biological role, component of the eukaryotic translation initiation factor 3 (eIF-3) complex, which is involved in protein synthesis of a specialized repertoire of mRNAs and, together with other initiation factors, stimulates binding of mRNA and methionyl-tRNAi to the 40S ribosome. The eIF-3 complex specifically targets and initiates translation of a subset of mRNAs involved in cell proliferation. This is Eukaryotic translation initiation factor 3 subunit I from Drosophila ananassae (Fruit fly).